Here is a 331-residue protein sequence, read N- to C-terminus: Aromatic 2-oxoacid reductase (331 aa).

Residues 154–155, Asp-175, 205–206, Asn-211, 232–234, and Asp-258 each bind NAD(+); these read RI, AP, and AAR. Arg-234 is a catalytic residue. Glu-263 is a catalytic residue. The active-site Proton donor is His-295.

Belongs to the D-isomer specific 2-hydroxyacid dehydrogenase family.

It catalyses the reaction (R)-3-phenyllactate + NAD(+) = 3-phenylpyruvate + NADH + H(+). The catalysed reaction is (2R)-2-hydroxy-3-(4-hydroxyphenyl)propanoate + NAD(+) = 3-(4-hydroxyphenyl)pyruvate + NADH + H(+). The enzyme catalyses 3-(indol-3-yl)lactate + NAD(+) = indole-3-pyruvate + NADH + H(+). Its pathway is amino-acid degradation. Functionally, essential for the reductive metabolism of L-phenylalanine, L-tyrosine and L-tryptophan. Catalyzes the conversion of phenylpyruvic acid to phenyllactic acid, 4-hydroxy-phenylpyruvic acid to 4-hydroxy-phenyllactic acid, and indolepyruvic acid to indolelactic acid. In Clostridium sporogenes (strain ATCC 15579), this protein is Aromatic 2-oxoacid reductase.